The following is an 82-amino-acid chain: Beta-defensin 113 (82 aa).

A signal peptide spans 1-16 (MKILCIFLTFVFTVSC). 3 cysteine pairs are disulfide-bonded: cysteine 35/cysteine 61, cysteine 42/cysteine 56, and cysteine 46/cysteine 62.

The protein belongs to the beta-defensin family.

The protein resides in the secreted. Has antibacterial activity. The protein is Beta-defensin 113 (DEFB113) of Homo sapiens (Human).